We begin with the raw amino-acid sequence, 358 residues long: Alanine racemase, biosynthetic (358 aa).

Lys34 acts as the Proton acceptor; specific for D-alanine in catalysis. Lys34 is modified (N6-(pyridoxal phosphate)lysine). Arg130 serves as a coordination point for substrate. The active-site Proton acceptor; specific for L-alanine is the Tyr254. Met302 contacts substrate.

The protein belongs to the alanine racemase family. Pyridoxal 5'-phosphate is required as a cofactor.

The catalysed reaction is L-alanine = D-alanine. It functions in the pathway amino-acid biosynthesis; D-alanine biosynthesis; D-alanine from L-alanine: step 1/1. The protein operates within cell wall biogenesis; peptidoglycan biosynthesis. Catalyzes the interconversion of L-alanine and D-alanine. Provides the D-alanine required for cell wall biosynthesis. The protein is Alanine racemase, biosynthetic (alr) of Pseudomonas aeruginosa (strain ATCC 15692 / DSM 22644 / CIP 104116 / JCM 14847 / LMG 12228 / 1C / PRS 101 / PAO1).